The chain runs to 239 residues: mRNA turnover protein 4 homolog (239 aa).

Residues 216-239 (QQMDDDLPESAPESEGESEEEDDS) form a disordered region. The span at 218 to 239 (MDDDLPESAPESEGESEEEDDS) shows a compositional bias: acidic residues. A phosphoserine mark is found at serine 225, serine 229, and serine 233.

This sequence belongs to the universal ribosomal protein uL10 family. As to quaternary structure, associates with the pre-60S ribosomal particle. Interacts with MINAS-60 (product of an alternative open reading frame of RBM10).

It localises to the nucleus. It is found in the nucleolus. Its subcellular location is the cytoplasm. In terms of biological role, component of the ribosome assembly machinery. Nuclear paralog of the ribosomal protein P0, it binds pre-60S subunits at an early stage of assembly in the nucleolus, and is replaced by P0 in cytoplasmic pre-60S subunits and mature 80S ribosomes. The chain is mRNA turnover protein 4 homolog (Mrto4) from Mus musculus (Mouse).